The primary structure comprises 98 residues: Co-chaperonin GroES 4 (98 aa).

The protein belongs to the GroES chaperonin family. In terms of assembly, heptamer of 7 subunits arranged in a ring. Interacts with the chaperonin GroEL.

Its subcellular location is the cytoplasm. In terms of biological role, together with the chaperonin GroEL, plays an essential role in assisting protein folding. The GroEL-GroES system forms a nano-cage that allows encapsulation of the non-native substrate proteins and provides a physical environment optimized to promote and accelerate protein folding. GroES binds to the apical surface of the GroEL ring, thereby capping the opening of the GroEL channel. This Mesorhizobium japonicum (strain LMG 29417 / CECT 9101 / MAFF 303099) (Mesorhizobium loti (strain MAFF 303099)) protein is Co-chaperonin GroES 4.